The following is a 454-amino-acid chain: uncharacterized protein (454 aa).

The 42-residue stretch at 364–405 (CSRPGCDAPAYHSEVHHVTPWTTTHRTDINDLTLACGPDNRL) folds into the HNH domain. The disordered stretch occupies residues 415–434 (NAKGDTEWLPPAHLDHGQPR).

The protein belongs to the Rv1128c/1148c/1588c/1702c/1945/3466 family.

This is an uncharacterized protein from Mycobacterium tuberculosis (strain CDC 1551 / Oshkosh).